An 86-amino-acid polypeptide reads, in one-letter code: Serine protease inhibitor Kazal-type 2 (86 aa).

The N-terminal stretch at Met-1–Ser-16 is a signal peptide. The region spanning Gln-32–Cys-86 is the Kazal-like domain. Intrachain disulfides connect Cys-38/Cys-68, Cys-46/Cys-65, and Cys-54/Cys-86.

It is found in the secreted. The protein localises to the cytoplasmic vesicle. The protein resides in the secretory vesicle. It localises to the acrosome. As a strong inhibitor of acrosin, it is required for normal spermiogenesis. It probably hinders premature activation of proacrosin and other proteases, thus preventing the cascade of events leading to spermiogenesis defects. May be involved in the regulation of serine protease-dependent germ cell apoptosis. It also inhibits trypsin. The protein is Serine protease inhibitor Kazal-type 2 (Spink2) of Rattus norvegicus (Rat).